The chain runs to 683 residues: DNA ligase (683 aa).

NAD(+) contacts are provided by residues 42 to 46 (DAEYD), 91 to 92 (SL), and E122. Catalysis depends on K124, which acts as the N6-AMP-lysine intermediate. The NAD(+) site is built by R145, E182, K299, and K323. Residues C417, C420, C435, and C441 each coordinate Zn(2+). Residues 602-683 (APQGVLAGKT…MRKLLEGQTT (82 aa)) enclose the BRCT domain.

This sequence belongs to the NAD-dependent DNA ligase family. LigA subfamily. Requires Mg(2+) as cofactor. Mn(2+) serves as cofactor.

It catalyses the reaction NAD(+) + (deoxyribonucleotide)n-3'-hydroxyl + 5'-phospho-(deoxyribonucleotide)m = (deoxyribonucleotide)n+m + AMP + beta-nicotinamide D-nucleotide.. Its function is as follows. DNA ligase that catalyzes the formation of phosphodiester linkages between 5'-phosphoryl and 3'-hydroxyl groups in double-stranded DNA using NAD as a coenzyme and as the energy source for the reaction. It is essential for DNA replication and repair of damaged DNA. The polypeptide is DNA ligase (Paraburkholderia phymatum (strain DSM 17167 / CIP 108236 / LMG 21445 / STM815) (Burkholderia phymatum)).